Consider the following 743-residue polypeptide: Dystrobrevin alpha (743 aa).

Residues 1–288 (MIEDSGKRGN…SHSNQHQMKE (288 aa)) are interaction with MAGEE1. Residues 238–294 (FHPVECSYCHSESMMGFRYRCQQCHNYQLCQDCFWRGHAGGSHSNQHQMKEYTSWKS) form a ZZ-type zinc finger. Zn(2+)-binding residues include Cys-243, Cys-246, Cys-258, Cys-261, Cys-267, Cys-270, His-280, and His-284. A syntrophin-binding region region spans residues 400–450 (DRLADEHVLIGLYVNMLRNNPSCMLESSNRLDEEHRLIARYAARLAAESSS). Positions 461–556 (DISFTIDANK…EGLMKLLKTQ (96 aa)) form a coiled coil. The segment at 556–575 (QGAGSPRSSPSHTISRPIPM) is disordered. Residues 557-569 (GAGSPRSSPSHTI) are compositionally biased toward polar residues. The residue at position 662 (Ser-662) is a Phosphoserine.

It belongs to the dystrophin family. Dystrobrevin subfamily. As to quaternary structure, interacts with dystrophin, utrophin and the syntrophins SNTA1, SNTB1, SNTB2, SNTG1 and SNTG2. Interacts with MAGEE1. Binds dystrobrevin binding protein 1. Interacts with CTNNAL1. The interaction is required for correct localization of both CTNNAL1 and DTNA. Does not interact with dystrophin. Phosphorylation of DTN-1 on tyrosine kinase substrate domain present in the C-terminus. Highly expressed in brain, skeletal and cardiac muscles, and expressed at lower levels in lung, liver and pancreas. Isoform 2 is not expressed in cardiac muscle. Isoform 7 and isoform 8 are only expressed in muscle.

Its subcellular location is the cytoplasm. It is found in the synapse. It localises to the cell membrane. In terms of biological role, may be involved in the formation and stability of synapses as well as being involved in the clustering of nicotinic acetylcholine receptors. This is Dystrobrevin alpha from Homo sapiens (Human).